Reading from the N-terminus, the 299-residue chain is Protoheme IX farnesyltransferase (299 aa).

9 helical membrane-spanning segments follow: residues 25–45 (VVLL…RAGV), 47–67 (WTVL…AAAV), 95–115 (AAAL…LLTF), 119–139 (LAAW…TGFL), 147–167 (IVIG…AVTG), 173–193 (PLLL…ALAI), 218–238 (VHIL…FAIH), 243–263 (LYLA…IALY), and 277–297 (FSIW…YLLL).

Belongs to the UbiA prenyltransferase family. Protoheme IX farnesyltransferase subfamily.

Its subcellular location is the cell inner membrane. The enzyme catalyses heme b + (2E,6E)-farnesyl diphosphate + H2O = Fe(II)-heme o + diphosphate. The protein operates within porphyrin-containing compound metabolism; heme O biosynthesis; heme O from protoheme: step 1/1. Functionally, converts heme B (protoheme IX) to heme O by substitution of the vinyl group on carbon 2 of heme B porphyrin ring with a hydroxyethyl farnesyl side group. The polypeptide is Protoheme IX farnesyltransferase (Stutzerimonas stutzeri (strain A1501) (Pseudomonas stutzeri)).